The chain runs to 441 residues: Trigger factor (441 aa).

In terms of domain architecture, PPIase FKBP-type spans 161–246 (GDMVTVDFQG…VKDVKERILA (86 aa)).

It belongs to the FKBP-type PPIase family. Tig subfamily.

It localises to the cytoplasm. It catalyses the reaction [protein]-peptidylproline (omega=180) = [protein]-peptidylproline (omega=0). Involved in protein export. Acts as a chaperone by maintaining the newly synthesized protein in an open conformation. Functions as a peptidyl-prolyl cis-trans isomerase. The chain is Trigger factor from Desulfotalea psychrophila (strain LSv54 / DSM 12343).